The sequence spans 892 residues: Chromodomain-helicase-DNA-binding protein 3 (892 aa).

Basic and acidic residues predominate over residues 1–20 (MSSKRGADPDWKTPGKASKD). A disordered region spans residues 1–29 (MSSKRGADPDWKTPGKASKDKRPKTNAKK). A PHD-type zinc finger spans residues 35–82 (EEYCKVCSDGGDLLCCDSCPSVYHRTCLSPPLKSIPKGDWICPRCIPL). Chromo domains lie at 84–156 (GKAE…PSLE) and 179–240 (LLVQ…GRQR). In terms of domain architecture, Helicase ATP-binding spans 279 to 458 (RYSWGQGIPT…FHLLNFLSSG (180 aa)). ATP is bound at residue 292–299 (DEMGLGKT). Residues 409-412 (DEAH) carry the DEAH box motif. Residues 590–739 (LLSKMLKQLK…LTHLVVRPGM (150 aa)) enclose the Helicase C-terminal domain. The disordered stretch occupies residues 839–892 (SQPKLPKKQKKQSQQSQVDVESIMGKGKRIRKEIDYSNQYPSPNRATPSSIVLM). Residues 874–892 (YSNQYPSPNRATPSSIVLM) are compositionally biased toward polar residues.

Belongs to the SNF2/RAD54 helicase family. As to quaternary structure, monomer.

It localises to the nucleus. Its subcellular location is the chromosome. It catalyses the reaction ATP + H2O = ADP + phosphate + H(+). Its activity is regulated as follows. ATPase activity is stimulated by binding to DNA or nucleosomes, but is strongly activated by nucleosomes. Functionally, ATP-dependent chromatin-remodeling factor which acts in nucleosome-remodeling by catalyzing ATP-dependent nucleosome mobilization. Likely to be involved in the regulation of transcription. The polypeptide is Chromodomain-helicase-DNA-binding protein 3 (Drosophila melanogaster (Fruit fly)).